Here is a 216-residue protein sequence, read N- to C-terminus: Thymidylate kinase (216 aa).

10–17 provides a ligand contact to ATP; that stretch reads GPDGAGKS.

This sequence belongs to the thymidylate kinase family.

The catalysed reaction is dTMP + ATP = dTDP + ADP. In terms of biological role, phosphorylation of dTMP to form dTDP in both de novo and salvage pathways of dTTP synthesis. The sequence is that of Thymidylate kinase from Lactobacillus acidophilus (strain ATCC 700396 / NCK56 / N2 / NCFM).